A 185-amino-acid chain; its full sequence is Intraflagellar transport protein 22 homolog (185 aa).

Residues 10-17, 63-67, and 123-126 contribute to the GTP site; these read GPCESGKT, DCGGD, and HKPG. Serine 137 is subject to Phosphoserine.

Belongs to the small GTPase superfamily. Rab family. In terms of assembly, component of the IFT complex B, at least composed of IFT20, IFT22, IFT25, IFT27, IFT46, IFT52, TRAF3IP1/IFT54, IFT57, IFT74, IFT80, IFT81, and IFT88. Interacts with IFT88. Interacts with CFAP61.

The protein resides in the cell projection. Its subcellular location is the cilium. Its function is as follows. Small GTPase-like component of the intraflagellar transport (IFT) complex B. The polypeptide is Intraflagellar transport protein 22 homolog (Ift22) (Mus musculus (Mouse)).